The sequence spans 299 residues: Putative ankyrin repeat protein R864 (299 aa).

7 ANK repeats span residues 78 to 107 (SLNK…NIES), 108 to 137 (NNNY…NIKS), 139 to 167 (NNRV…DIRS), 168 to 197 (NDDY…DIRS), 199 to 227 (YYYI…DIRA), 228 to 257 (YNNC…DIRN), and 258 to 287 (DNDY…DIKT).

The protein is Putative ankyrin repeat protein R864 of Acanthamoeba polyphaga mimivirus (APMV).